We begin with the raw amino-acid sequence, 264 residues long: Hemin import ATP-binding protein HmuV (264 aa).

In terms of domain architecture, ABC transporter spans 2 to 242 (IEAVNICVQR…QNLSDAYHCS (241 aa)). 34–41 (GPNGSGKS) lines the ATP pocket.

Belongs to the ABC transporter superfamily. Heme (hemin) importer (TC 3.A.1.14.5) family. As to quaternary structure, the complex is composed of two ATP-binding proteins (HmuV), two transmembrane proteins (HmuU) and a solute-binding protein (HmuT).

It localises to the cell inner membrane. In terms of biological role, part of the ABC transporter complex HmuTUV involved in hemin import. Responsible for energy coupling to the transport system. This chain is Hemin import ATP-binding protein HmuV, found in Bartonella quintana (strain Toulouse) (Rochalimaea quintana).